The chain runs to 227 residues: 6,7-dimethyl-8-ribityllumazine synthase, chloroplastic (227 aa).

Residues 1–71 (MKSLASPPCL…LRSSFVQTAA (71 aa)) constitute a chloroplast transit peptide. 5-amino-6-(D-ribitylamino)uracil is bound by residues phenylalanine 94, 128–130 (SFE), and 152–154 (AVI). (2S)-2-hydroxy-3-oxobutyl phosphate is bound at residue 157-158 (DT). The Proton donor role is filled by histidine 160. Residue phenylalanine 185 participates in 5-amino-6-(D-ribitylamino)uracil binding. Arginine 199 contacts (2S)-2-hydroxy-3-oxobutyl phosphate.

The protein belongs to the DMRL synthase family. Oligomer forming an icosahedral capsid.

It is found in the plastid. Its subcellular location is the chloroplast. The catalysed reaction is (2S)-2-hydroxy-3-oxobutyl phosphate + 5-amino-6-(D-ribitylamino)uracil = 6,7-dimethyl-8-(1-D-ribityl)lumazine + phosphate + 2 H2O + H(+). Its pathway is cofactor biosynthesis; riboflavin biosynthesis; riboflavin from 2-hydroxy-3-oxobutyl phosphate and 5-amino-6-(D-ribitylamino)uracil: step 1/2. Its function is as follows. Catalyzes the formation of 6,7-dimethyl-8-ribityllumazine by condensation of 5-amino-6-(D-ribitylamino)uracil with 3,4-dihydroxy-2-butanone 4-phosphate. This is the penultimate step in the biosynthesis of riboflavin. The protein is 6,7-dimethyl-8-ribityllumazine synthase, chloroplastic of Arabidopsis thaliana (Mouse-ear cress).